The sequence spans 90 residues: Acylphosphatase (90 aa).

In terms of domain architecture, Acylphosphatase-like spans 3–90 (QRQFTVYGCV…RVFSDFTIER (88 aa)). Residues Arg-18 and Asn-36 contribute to the active site.

The protein belongs to the acylphosphatase family.

The enzyme catalyses an acyl phosphate + H2O = a carboxylate + phosphate + H(+). This chain is Acylphosphatase (acyP), found in Actinobacillus succinogenes (strain ATCC 55618 / DSM 22257 / CCUG 43843 / 130Z).